Reading from the N-terminus, the 1293-residue chain is Phosphoribosylformylglycinamidine synthase (1293 aa).

Residues 305–316 and A676 each bind ATP; that span reads GAATGSGGEIRD. Residues 305–328 form a disordered region; that stretch reads GAATGSGGEIRDEGATGRGSKPKA. Residues D677, E716, N720, and D884 each contribute to the Mg(2+) site. ATP is bound at residue S886. A Glutamine amidotransferase type-1 domain is found at 1040–1293; that stretch reads MAILREQGVN…MFRNARVNLG (254 aa). The active-site Nucleophile is C1133. Active-site residues include H1258 and E1260.

It in the N-terminal section; belongs to the FGAMS family. As to quaternary structure, monomer.

The protein localises to the cytoplasm. It catalyses the reaction N(2)-formyl-N(1)-(5-phospho-beta-D-ribosyl)glycinamide + L-glutamine + ATP + H2O = 2-formamido-N(1)-(5-O-phospho-beta-D-ribosyl)acetamidine + L-glutamate + ADP + phosphate + H(+). It participates in purine metabolism; IMP biosynthesis via de novo pathway; 5-amino-1-(5-phospho-D-ribosyl)imidazole from N(2)-formyl-N(1)-(5-phospho-D-ribosyl)glycinamide: step 1/2. Phosphoribosylformylglycinamidine synthase involved in the purines biosynthetic pathway. Catalyzes the ATP-dependent conversion of formylglycinamide ribonucleotide (FGAR) and glutamine to yield formylglycinamidine ribonucleotide (FGAM) and glutamate. The chain is Phosphoribosylformylglycinamidine synthase from Shewanella sp. (strain MR-7).